A 353-amino-acid chain; its full sequence is Galectin-9 (353 aa).

One can recognise a Galectin 1 domain in the interval 17-147 (FTGPIQGGLQ…CLKLSFITFQ (131 aa)). Residues asparagine 47, histidine 60, arginine 64, asparagine 74, and 81 to 87 (WGPEERK) contribute to the a beta-D-galactoside site. The tract at residues 167–186 (QFPRTPKGRKQKTQNFRPAH) is disordered. The 129-residue stretch at 225–353 (FYTPIPNGLY…GDIQLTHVQT (129 aa)) folds into the Galectin 2 domain. A beta-D-galactoside is bound by residues histidine 265, arginine 269, threonine 279, and 285-291 (WGQEERS).

In terms of assembly, homodimer. Accentuated expression in liver and thymus of embryo, detected in embryonic heart, brain, lung, liver, and kidney. Highly expressed in adult thymus, small intestine, and liver, and to a lesser extent in lung, kidney, spleen, cardiac, and skeletal muscle. Barely detectable in brain and reticulocyte. Expressed in placenta, uterus and decidua during pregnancy. Expressed in CD4+ T-cells with higher levels in iTreg cells than other T-cell types and sustained high levels throughout iTreg cell differentiation (at protein level). Expressed in myeloid cells in lung. Constitutively expressed in microglia. Isoform 1 is expressed exclusively in the small intestine. Isoform 2 expression in decidua increases in pathological pregnancy from gestation day 7.5 to 13.5 and it is higher than in normal pregnancy. Isoform 3 expression in decidua is higher in normal pregnancy than in pathological pregnancy.

It localises to the cytoplasm. The protein localises to the nucleus. It is found in the secreted. In terms of biological role, binds galactosides. Has high affinity for the Forssman pentasaccharide. Ligand for HAVCR2/TIM3. Binding to HAVCR2 induces T-helper type 1 lymphocyte (Th1) death. Also stimulates bactericidal activity in infected macrophages by causing macrophage activation and IL1B secretion which restricts intracellular bacterial growth. Ligand for P4HB; the interaction retains P4HB at the cell surface of Th2 T-helper cells, increasing disulfide reductase activity at the plasma membrane, altering the plasma membrane redox state and enhancing cell migration. Ligand for CD44; the interaction enhances binding of SMAD3 to the FOXP3 promoter, leading to up-regulation of FOXP3 expression and increased induced regulatory T (iTreg) cell stability and suppressive function. Promotes ability of mesenchymal stromal cells to suppress T-cell proliferation. Expands regulatory T-cells and induces cytotoxic T-cell apoptosis following virus infection. Activates ERK1/2 phosphorylation inducing cytokine (IL-6, IL-8, IL-12) and chemokine (CCL2) production in mast and dendritic cells. Inhibits degranulation and induces apoptosis of mast cells. Induces maturation and migration of dendritic cells. Inhibits natural killer (NK) cell function. Can transform NK cell phenotype from peripheral to decidual during pregnancy. Astrocyte derived galectin-9 enhances microglial TNF production. May play a role in thymocyte-epithelial interactions relevant to the biology of the thymus. May provide the molecular basis for urate flux across cell membranes, allowing urate that is formed during purine metabolism to efflux from cells and serving as an electrogenic transporter that plays an important role in renal and gastrointestinal urate excretion. Highly selective to the anion urate. Its function is as follows. Acts as an eosinophil chemoattractant. It also inhibits angiogenesis. Suppresses IFNG production by natural killer cells. In Mus musculus (Mouse), this protein is Galectin-9 (Lgals9).